The chain runs to 263 residues: Hydroxyethylthiazole kinase 1 (263 aa).

Substrate is bound at residue Met-42. ATP is bound by residues Lys-118 and Thr-164. Residue Gly-191 coordinates substrate.

This sequence belongs to the Thz kinase family. Requires Mg(2+) as cofactor.

It catalyses the reaction 5-(2-hydroxyethyl)-4-methylthiazole + ATP = 4-methyl-5-(2-phosphooxyethyl)-thiazole + ADP + H(+). Its pathway is cofactor biosynthesis; thiamine diphosphate biosynthesis; 4-methyl-5-(2-phosphoethyl)-thiazole from 5-(2-hydroxyethyl)-4-methylthiazole: step 1/1. In terms of biological role, catalyzes the phosphorylation of the hydroxyl group of 4-methyl-5-beta-hydroxyethylthiazole (THZ). The polypeptide is Hydroxyethylthiazole kinase 1 (Clostridium botulinum (strain Langeland / NCTC 10281 / Type F)).